A 260-amino-acid chain; its full sequence is Indole-3-glycerol phosphate synthase (260 aa).

Belongs to the TrpC family.

The catalysed reaction is 1-(2-carboxyphenylamino)-1-deoxy-D-ribulose 5-phosphate + H(+) = (1S,2R)-1-C-(indol-3-yl)glycerol 3-phosphate + CO2 + H2O. It participates in amino-acid biosynthesis; L-tryptophan biosynthesis; L-tryptophan from chorismate: step 4/5. The polypeptide is Indole-3-glycerol phosphate synthase (Staphylococcus aureus (strain MRSA252)).